We begin with the raw amino-acid sequence, 109 residues long: Nucleoid-associated protein LJ_0424 (109 aa).

Belongs to the YbaB/EbfC family. As to quaternary structure, homodimer.

The protein resides in the cytoplasm. Its subcellular location is the nucleoid. Its function is as follows. Binds to DNA and alters its conformation. May be involved in regulation of gene expression, nucleoid organization and DNA protection. This chain is Nucleoid-associated protein LJ_0424, found in Lactobacillus johnsonii (strain CNCM I-12250 / La1 / NCC 533).